A 537-amino-acid chain; its full sequence is MNRTQLLTLIATGLGLFMIFLDALIVNVALPDIQRSFAVGEDGLQWVVASYSLGMAVFIMSAATLADLDGRRRWYLIGVSLFTLGSIACGLAPSIAVLTTARGAQGLGAAAVSVTSLALVSAAFPEAKEKARAIGIWTAIASIGTTTGPTLGGLLVDQWGWRSIFYVNLPMGALVLFLTLCYVEESCNERARRFDLSGQLLFIVAVGALVYAVIEGPQIGWTSVQTIVMLWTAAVGCALFVWLERRSSNPMMDLTLFRDTSYALAIATICTVFFAVYGMLLLTTQFLQNVRGYTPSVTGLMILPFSAAVAIVSPLVGHLVGRIGARVPILAGLCMLMLGLLMLIFSEHRSSALVLVGLGLCGSGVALCLTPITTVAMTAVPAERAGMASGIMSAQRAIGSTIGFAVLGSVLAAWLSATLEPHLERAVPDPVQRHVLAEIIIDSANPRAHVGGIVPRRHIEHRDPVAIAEEDFIEGIRVALLVATATLAVVFLAGWRWFPRDVHTAGSDLSERLPTAMTVECAVSHMPGATWCRLWPA.

A run of 14 helical transmembrane segments spans residues 6 to 26, 46 to 66, 77 to 97, 104 to 124, 136 to 156, 163 to 183, 200 to 220, 223 to 243, 262 to 282, 300 to 320, 327 to 347, 352 to 372, 397 to 417, and 478 to 498; these read LLTLIATGLGLFMIFLDALIV, WVVASYSLGMAVFIMSAATLA, IGVSLFTLGSIACGLAPSIAV, AQGLGAAAVSVTSLALVSAAF, IWTAIASIGTTTGPTLGGLLV, SIFYVNLPMGALVLFLTLCYV, LLFIVAVGALVYAVIEGPQIG, SVQTIVMLWTAAVGCALFVWL, YALAIATICTVFFAVYGMLLL, LMILPFSAAVAIVSPLVGHLV, VPILAGLCMLMLGLLMLIFSE, ALVLVGLGLCGSGVALCLTPI, AIGSTIGFAVLGSVLAAWLSA, and VALLVATATLAVVFLAGWRWF.

This sequence belongs to the major facilitator superfamily. EmrB family.

The protein localises to the cell membrane. Functionally, contributes to spectinomycin and tetracycline resistance. This chain is Multidrug resistance protein Stp (stp), found in Mycobacterium tuberculosis (strain ATCC 25618 / H37Rv).